We begin with the raw amino-acid sequence, 45 residues long: Temporin-SHf (45 aa).

The signal sequence occupies residues 1-10 (FLGTINLSLC). A propeptide spanning residues 11–35 (EEERDADEEERRDEPDESNVEVKKR) is cleaved from the precursor. Phe-43 is subject to Phenylalanine amide.

Belongs to the frog skin active peptide (FSAP) family. Temporin subfamily.

It localises to the secreted. The protein resides in the target cell membrane. In terms of biological role, non-amphipathic alpha-helical antimicrobial peptide with potent activity against some Gram-positive bacteria (including methicillin-resistant Staphylococcus aureus (MRSA)), weak activity against Gram-negative bacteria and no activity against fungi. Permeabilizates membranes through a detergent-like effect probably via the carpet mechanism. More precisely, it strongly and selectively perturbs anionic bilayers membranes by interacting with the polar headgroups and the glycerol backbone region of the phospholipids, hence disrupting the acyl chain packing of the bilayer. Is not active against Leishmania (promastigote and axenic amastigote forms). Does not show hemolytic activity. Does not show toxicity for human THP-1-derived macrophages. The protein is Temporin-SHf of Pelophylax saharicus (Sahara frog).